The following is a 418-amino-acid chain: Deubiquitinase and deneddylase Dub1 (418 aa).

A compositionally biased stretch (polar residues) spans 1-10 (MLSPTNSISK). The tract at residues 1-23 (MLSPTNSISKTAPVPPQDSSKPV) is disordered. A helical membrane pass occupies residues 40-60 (TALAVLLVVVTLGLILLFYSF). The disordered stretch occupies residues 72–144 (TRPSTKEQPT…PLPPKAPKPV (73 aa)). A compositionally biased stretch (pro residues) spans 86-141 (VPLPSPPLAVPRPSTPPPPVISRPSTPPAPTPAISPPSTPSAPKPSTPPPLPPKAP). Catalysis depends on residues His-288, Asp-305, and Cys-358.

The protein belongs to the peptidase C48 family.

It is found in the secreted. The protein resides in the host cell. The protein localises to the membrane. Effector proteins function to alter host cell physiology and promote bacterial survival in host tissues. This protease possesses deubiquitinating and deneddylating activities. In Chlamydia trachomatis serovar B (strain TZ1A828/OT), this protein is Deubiquitinase and deneddylase Dub1 (cdu1).